The chain runs to 424 residues: UPF0229 protein Sde_0732 (424 aa).

The tract at residues Ile52–Glu109 is disordered. Residues Asp58 to Gly69 are compositionally biased toward basic and acidic residues.

Belongs to the UPF0229 family.

In Saccharophagus degradans (strain 2-40 / ATCC 43961 / DSM 17024), this protein is UPF0229 protein Sde_0732.